The chain runs to 397 residues: Decapping and exoribonuclease protein (397 aa).

A compositionally biased stretch (basic and acidic residues) spans 1 to 20 (MESRGTKREAGKIEVAEPRN). The disordered stretch occupies residues 1–37 (MESRGTKREAGKIEVAEPRNKLPRPAPSLPTDPALYS). Arginine 58 provides a ligand contact to substrate. Positions 67–88 (LRYYSPPPTNGQSPNFDLRDGY) are disordered. Substrate-binding positions include glutamate 101 and 131–133 (WRG). Glutamate 192 contacts Mg(2+). Substrate-binding residues include cysteine 217 and glutamate 234. Residues glutamate 234, aspartate 236, glutamate 253, and leucine 254 each coordinate Mg(2+). Substrate is bound by residues lysine 255 and glutamine 280. A Phosphothreonine modification is found at threonine 392. Serine 394 bears the Phosphoserine mark.

This sequence belongs to the DXO/Dom3Z family. Mg(2+) serves as cofactor.

It is found in the nucleus. It catalyses the reaction a 5'-end triphospho-ribonucleoside in mRNA + H2O = a 5'-end phospho-ribonucleoside in mRNA + diphosphate + H(+). The enzyme catalyses a 5'-end NAD(+)-phospho-ribonucleoside in mRNA + H2O = a 5'-end phospho-ribonucleoside in mRNA + NAD(+) + H(+). The catalysed reaction is a 5'-end NAD(+)-phospho-ribonucleoside in snoRNA + H2O = a 5'-end phospho-ribonucleoside in snoRNA + NAD(+) + H(+). It carries out the reaction a 5'-end (N(7)-methyl 5'-triphosphoguanosine)-ribonucleoside-ribonucleotide in mRNA + H2O = a (N(7)-methyl 5'-triphosphoguanosine)-nucleoside + a 5'-end phospho-ribonucleoside in mRNA + H(+). It catalyses the reaction a 5'-end FAD-phospho-ribonucleoside in mRNA + H2O = a 5'-end phospho-ribonucleoside in mRNA + FAD + H(+). The enzyme catalyses a 5'-end CoA-ribonucleoside in mRNA + H2O = 3'-dephospho-CoA + a 5'-end phospho-ribonucleoside in mRNA + H(+). In terms of biological role, decapping enzyme for NAD-capped RNAs: specifically hydrolyzes the nicotinamide adenine dinucleotide (NAD) cap from a subset of RNAs by removing the entire NAD moiety from the 5'-end of an NAD-capped RNA. The NAD-cap is present at the 5'-end of some RNAs and snoRNAs. In contrast to the canonical 5'-end N7 methylguanosine (m7G) cap, the NAD cap promotes mRNA decay. Preferentially acts on NAD-capped transcripts in response to environmental stress. Also acts as a non-canonical decapping enzyme that removes the entire cap structure of m7G capped or incompletely capped RNAs and mediates their subsequent degradation. Specifically degrades pre-mRNAs with a defective 5'-end m7G cap and is part of a pre-mRNA capping quality control. Has decapping activity toward incomplete 5'-end m7G cap mRNAs such as unmethylated 5'-end-capped RNA (cap0), while it has no activity toward 2'-O-ribose methylated m7G cap (cap1). In contrast to canonical decapping enzymes DCP2 and NUDT16, which cleave the cap within the triphosphate linkage, the decapping activity releases the entire cap structure GpppN and a 5'-end monophosphate RNA. Also has 5'-3' exoribonuclease activities: The 5'-end monophosphate RNA is then degraded by the 5'-3' exoribonuclease activity, enabling this enzyme to decap and degrade incompletely capped mRNAs. Also possesses RNA 5'-pyrophosphohydrolase activity by hydrolyzing the 5'-end triphosphate to release pyrophosphates. Exhibits decapping activity towards FAD-capped RNAs. Exhibits decapping activity towards dpCoA-capped RNAs in vitro. This Bos taurus (Bovine) protein is Decapping and exoribonuclease protein.